Here is a 109-residue protein sequence, read N- to C-terminus: Nucleoid-associated protein swp_1717 (109 aa).

The interval 88 to 109 (QKDKMAEVTGGMQLPPGMKMPF) is disordered.

It belongs to the YbaB/EbfC family. Homodimer.

Its subcellular location is the cytoplasm. It localises to the nucleoid. Functionally, binds to DNA and alters its conformation. May be involved in regulation of gene expression, nucleoid organization and DNA protection. The sequence is that of Nucleoid-associated protein swp_1717 from Shewanella piezotolerans (strain WP3 / JCM 13877).